Reading from the N-terminus, the 517-residue chain is Maturase K (517 aa).

It belongs to the intron maturase 2 family. MatK subfamily.

The protein localises to the plastid. The protein resides in the chloroplast. Its function is as follows. Usually encoded in the trnK tRNA gene intron. Probably assists in splicing its own and other chloroplast group II introns. The chain is Maturase K from Dracula chimaera.